A 141-amino-acid polypeptide reads, in one-letter code: Glutathione transferase FosA (141 aa).

Positions 4-117 (SLNHLTLAVS…DGHKLELHVG (114 aa)) constitute a VOC domain. Positions 7, 67, and 113 each coordinate Mn(2+).

Belongs to the fosfomycin resistance protein family. Homodimer. It depends on Mn(2+) as a cofactor.

The protein localises to the cytoplasm. It carries out the reaction RX + glutathione = an S-substituted glutathione + a halide anion + H(+). With respect to regulation, requires the monovalent cation K(+) for optimal activity. Functionally, metalloglutathione transferase which confers resistance to fosfomycin by catalyzing the addition of glutathione to fosfomycin. This is Glutathione transferase FosA (fosA) from Serratia marcescens.